Reading from the N-terminus, the 87-residue chain is Phytosulfokines 1 (87 aa).

The N-terminal stretch at 1-24 is a signal peptide; sequence MMKTKSEVLIFFFTLVLLLSMASS. Positions 25-76 are excised as a propeptide; the sequence is VILREDGFAPPKPSPTTHEKASTKGDRDGVECKNSDSEEECLVKKTVAAHTD. The segment at 31-59 is disordered; the sequence is GFAPPKPSPTTHEKASTKGDRDGVECKNS. The span at 41-59 shows a compositional bias: basic and acidic residues; it reads THEKASTKGDRDGVECKNS. Sulfotyrosine is present on residues Tyr-77 and Tyr-79. Positions 82-87 are excised as a propeptide; that stretch reads DLNLSP.

Belongs to the phytosulfokine family. Post-translationally, sulfation is important for activity and for the binding to a putative membrane receptor. In terms of processing, PSK-beta is produced from PSK-alpha by exopeptidase digestion. Expressed only in roots.

The protein localises to the secreted. Functionally, promotes plant cell differentiation, organogenesis and somatic embryogenesis as well as cell proliferation. This chain is Phytosulfokines 1 (PSK1), found in Arabidopsis thaliana (Mouse-ear cress).